A 436-amino-acid polypeptide reads, in one-letter code: Cytochrome b5-related protein (436 aa).

Residues 16–100 (PTYRNSALIT…IAKYKVRDAA (85 aa)) enclose the Cytochrome b5 heme-binding domain. 2 residues coordinate heme: His-59 and His-82.

In terms of tissue distribution, muscle.

Functionally, may play a role in muscle cell metabolism. The chain is Cytochrome b5-related protein (Cyt-b5-r) from Drosophila melanogaster (Fruit fly).